The following is a 290-amino-acid chain: 7-methylguanosine phosphate-specific 5'-nucleotidase B (290 aa).

Asp-39 functions as the Nucleophile in the catalytic mechanism. Residues Asp-39 and Asp-41 each coordinate Mg(2+). Catalysis depends on Asp-41, which acts as the Proton donor. Glu-86 is a binding site for CMP. Glu-86 provides a ligand contact to N(7)-methyl-GMP. Substrate-binding positions include 154-155 (SA) and Lys-203. Asp-228 is a Mg(2+) binding site.

This sequence belongs to the pyrimidine 5'-nucleotidase family. Monomer.

It is found in the cytoplasm. It carries out the reaction N(7)-methyl-GMP + H2O = N(7)-methylguanosine + phosphate. The catalysed reaction is CMP + H2O = cytidine + phosphate. The enzyme catalyses a ribonucleoside 5'-phosphate + H2O = a ribonucleoside + phosphate. Its function is as follows. Specifically hydrolyzes 7-methylguanosine monophosphate (m(7)GMP) to 7-methylguanosine and inorganic phosphate. The specific activity for m(7)GMP may protect cells against undesired salvage of m(7)GMP and its incorporation into nucleic acids. Also has weak activity for CMP. UMP and purine nucleotides are poor substrates. This Xenopus laevis (African clawed frog) protein is 7-methylguanosine phosphate-specific 5'-nucleotidase B (Nt5c3b-b).